The primary structure comprises 362 residues: Guanine nucleotide-binding protein alpha-10 subunit (362 aa).

A lipid anchor (N-myristoyl glycine) is attached at G2. Residue C4 is the site of S-palmitoyl cysteine attachment. The 328-residue stretch at 35 to 362 (LEQSVLLIGP…QENLKDTGMI (328 aa)) folds into the G-alpha domain. The segment at 38 to 51 (SVLLIGPGESGKST) is G1 motif. GTP contacts are provided by residues 43–50 (GPGESGKS), 184–190 (VRIRVPT), 209–213 (DCGGQ), 278–281 (NKID), and A335. The Mg(2+) site is built by S50 and T190. A G2 motif region spans residues 182–190 (DIVRIRVPT). The segment at 205-214 (LSVIDCGGQR) is G3 motif. A G4 motif region spans residues 274–281 (ILFLNKID). The G5 motif stretch occupies residues 333 to 337 (TCAIS).

This sequence belongs to the G-alpha family. G proteins are composed of 3 units; alpha, beta and gamma. The alpha chain contains the guanine nucleotide binding site.

Guanine nucleotide-binding proteins (G proteins) are involved as modulators or transducers in various transmembrane signaling systems. This Caenorhabditis briggsae protein is Guanine nucleotide-binding protein alpha-10 subunit (gpa-10).